A 1187-amino-acid polypeptide reads, in one-letter code: Protein WWC2 (1187 aa).

WW domains follow at residues 10 to 43 (LPLP…DPRD) and 57 to 90 (DELP…DPRK). Coiled coils occupy residues 121–194 (KEQR…YKQQ) and 224–256 (ELKS…FHLD). Ser286 is modified (phosphoserine). Residues 302–423 (LAEKVRLSLQ…EETTKLTTSL (122 aa)) are a coiled coil. A disordered region spans residues 438–464 (SSGSSLGSLASSRGSLNTSSRGSLNSL). Residues 697–820 (ETAQVQIGLR…FSNEIFMLWY (124 aa)) form the C2 domain. 2 disordered regions span residues 830 to 849 (CKKN…QPML) and 874 to 963 (ELAQ…ETNT). The stretch at 859-885 (ALLARTSAELLAVEQELAQEEEEEELR) forms a coiled coil. A compositionally biased stretch (acidic residues) spans 875–884 (LAQEEEEEEL). Phosphothreonine is present on Thr999. Ser1017 is subject to Phosphoserine. Positions 1026–1045 (SLFVRNSTERRSLRVKRAVC) are interaction with PRKCZ. The stretch at 1063–1143 (DLELDLQASL…DLNAERLMRQ (81 aa)) forms a coiled coil.

The protein belongs to the WWC family. In terms of assembly, forms homodimers and heterodimers with WWC1 and WWC3. Interacts with DLC1 and PRKCZ. Interacts (via WW domains) with LATS1 and LATS2.

Its subcellular location is the cytoplasm. The protein localises to the cytosol. Regulator of the Hippo signaling pathway, also known as the Salvador-Warts-Hippo (SWH) pathway. Enhances phosphorylation of LATS1 and YAP1 and negatively regulates cell proliferation and organ growth due to a suppression of the transcriptional activity of YAP1, the major effector of the Hippo pathway. In Mus musculus (Mouse), this protein is Protein WWC2 (Wwc2).